The sequence spans 59 residues: Large ribosomal subunit protein uL30 (59 aa).

The protein belongs to the universal ribosomal protein uL30 family. Part of the 50S ribosomal subunit.

This chain is Large ribosomal subunit protein uL30, found in Actinobacillus pleuropneumoniae serotype 7 (strain AP76).